A 189-amino-acid polypeptide reads, in one-letter code: High affinity copper uptake protein 1 (189 aa).

At Met-1–Glu-67 the chain is on the extracellular side. The Methionine segments (Mets) motif signature appears at Met-13–Met-18. The tract at residues Met-15 to Ser-36 is disordered. Low complexity predominate over residues His-20–Ser-36. The chain crosses the membrane as a helical span at residues Met-68–Ala-88. Topologically, residues Arg-89 to His-131 are cytoplasmic. Thr-113 is modified (phosphothreonine). Residues Leu-132 to Phe-152 form a helical membrane-spanning segment. Residues Met-153–Tyr-155 are Extracellular-facing. Residues Asn-156–Trp-176 form a helical membrane-spanning segment. At Lys-177–His-189 the chain is on the cytoplasmic side. Residue Cys-188 is modified to Cysteine sulfenic acid (-SOH).

Belongs to the copper transporter (Ctr) (TC 1.A.56) family. SLC31A subfamily. Homotrimer; is stabilized by cisplatin via interactions between cisplatin and the methionine-rich clusters, and could be crucial for the copper(2+) reduction process and copper(1+) stabilization. Heterotrimer between SLC31A1, CCS and SOD1; this heterotrimer is copper(1+)-mediated and its maintenance is regulated through SOD1 activation. Interacts with KDR; this interaction is induced upon VEGFA stimulation leading to SLC31A1 and KDR subsequent co-internalization to early endosomes, thereby activating KDR downstream signaling in endothelial cells. Interacts (via C-terminal domain) with ATOX1 (via dimer form); this interaction improves ATOX1 stability and controls intracellular copper(1+) levels. Interacts with SLC31A2; this interaction stabilizes SLC31A2 and protects its from ubiquitination and degradation. Interacts (via C-terminal domain) with CCS; this interaction is copper(1+)-mediated. Proteolytic cleavage, leading to a truncated form, is facilitated by SLC31A2 and initiated preferentially by CTSL and to a minor extend by CTSB in endolysosomal compartments. A post-CTSL/cathepsin L processing occurs to yield to the fully truncated form. Post-translationally, sulfenylated at Cys-188 after stimulation with VEGFA, which induces SLC31A1-KDR disulfide bond formation and their co-internalization to early endosomes, driving to a sustained VEGFR2 signaling.

It localises to the cell membrane. The protein resides in the early endosome membrane. It is found in the recycling endosome membrane. Its subcellular location is the apical cell membrane. The protein localises to the late endosome membrane. It localises to the basolateral cell membrane. It carries out the reaction Ag(+)(out) = Ag(+)(in). The catalysed reaction is Cu(+)(out) = Cu(+)(in). Its function is as follows. Uniporter that mediates the transport of copper(1+) from the extracellular space to the cytoplasm, across the plasma membrane and delivers directly copper(1+) to specific chaperone such as ATOX1, via a copper(1+)- mediated transient interaction between the C-terminal domain and a copper(1+) chaperone, thus controlling intracellular copper(1+) levels. May function in copper(1+) import from the apical membrane thus may drive intestinal copper absorption. The copper(1+) transport mechanism is sodium-independent, saturable and of high-affinity. Also mediates the uptake of silver(1+). May function in the influx of the platinum-containing chemotherapeutic agents. The platinum-containing chemotherapeutic agents uptake is saturable. In vitro, mediates the transport of cadmium(2+) into cells. Also participates in the first step of copper(2+) acquisition by cells through a direct transfer of copper(2+) from copper(2+) carriers in blood, such as ALB to the N-terminal domain of SLC31A1, leading to copper(2+) reduction and probably followed by copper(1+) stabilization. In addition, functions as a redox sensor to promote angiogenesis in endothelial cells, in a copper(1+) transport independent manner, by transmitting the VEGF-induced ROS signal through a sulfenylation at Cys-189 leadin g to a subsequent disulfide bond formation between SLC31A1 and KDR. The SLC31A1-KDR complex is then co-internalized to early endosomes, driving a sustained VEGFR2 signaling. Mobilizes copper(1+) out of the endosomal compartment, making copper(1+) available for export out of the cells. This is High affinity copper uptake protein 1 from Sus scrofa (Pig).